The primary structure comprises 264 residues: 3-methyl-2-oxobutanoate hydroxymethyltransferase (264 aa).

Mg(2+)-binding residues include Asp43 and Asp82. Residues 43–44 (DS), Asp82, and Lys111 each bind 3-methyl-2-oxobutanoate. Glu113 is a Mg(2+) binding site. Glu180 (proton acceptor) is an active-site residue.

It belongs to the PanB family. In terms of assembly, homodecamer; pentamer of dimers. Mg(2+) serves as cofactor.

The protein resides in the cytoplasm. It carries out the reaction 3-methyl-2-oxobutanoate + (6R)-5,10-methylene-5,6,7,8-tetrahydrofolate + H2O = 2-dehydropantoate + (6S)-5,6,7,8-tetrahydrofolate. It participates in cofactor biosynthesis; (R)-pantothenate biosynthesis; (R)-pantoate from 3-methyl-2-oxobutanoate: step 1/2. Catalyzes the reversible reaction in which hydroxymethyl group from 5,10-methylenetetrahydrofolate is transferred onto alpha-ketoisovalerate to form ketopantoate. The sequence is that of 3-methyl-2-oxobutanoate hydroxymethyltransferase from Campylobacter fetus subsp. fetus (strain 82-40).